Here is a 147-residue protein sequence, read N- to C-terminus: Ubiquitin-conjugating enzyme E2 D2B (147 aa).

A UBC core domain is found at 1 to 147 (MALKRIHKEL…AREWTQKYAM (147 aa)). The active-site Glycyl thioester intermediate is the cysteine 85.

This sequence belongs to the ubiquitin-conjugating enzyme family. Interacts with CNOT4 (via RING domain). In terms of tissue distribution, testis-specific. Mainly expressed in the round spermatids (at protein level).

The enzyme catalyses S-ubiquitinyl-[E1 ubiquitin-activating enzyme]-L-cysteine + [E2 ubiquitin-conjugating enzyme]-L-cysteine = [E1 ubiquitin-activating enzyme]-L-cysteine + S-ubiquitinyl-[E2 ubiquitin-conjugating enzyme]-L-cysteine.. It participates in protein modification; protein ubiquitination. Functionally, catalyzes the covalent attachment of ubiquitin to other proteins. Mediates the selective degradation of short-lived and abnormal proteins. Functions in the E6/E6-AP-induced ubiquitination of p53/TP53. Mediates ubiquitination of PEX5 and SQSTM1 and autoubiquitination of STUB1 and TRAF6. Involved in the signal-induced conjugation and subsequent degradation of NFKBIA, FBXW2-mediated GCM1 ubiquitination and degradation, MDM2-dependent degradation of p53/TP53 and the activation of MAVS in the mitochondria by RIGI in response to viral infection Plays a role in early maturation of the testis. The sequence is that of Ubiquitin-conjugating enzyme E2 D2B (Ube2d2b) from Rattus norvegicus (Rat).